A 502-amino-acid polypeptide reads, in one-letter code: MTESVGGNKLVDFLVNVQSILNAASVKCHVVDESFPAKFFEKNPDKIYESYCKFIKNRSNSEGLIRNEDKLVLTTINKRFENGEYEPIQGGFYKLYHDIKLVCTILIHFYPQGTRNYQLVDKFYKFSSELLLRECCRIGIALTQTNNIKSRSGKLLSGNEMDEYDDDDATELDKIISYDFIKISMNYTVPISQTYQIRTKDMDLFSSIISKSNLDKRPHELPNTNFKINNVLPQTDIENEAPRLGFVGANTSNIPDPTLPPTEMMTRFLHPNWYALPTTVWLKYGNYNSWAPSFNENGTVVDSTTRGLIWLERIGYMDLYEKNEKKVKQEELLNTNEEGINRKQNDENNKNVDGKSNGVQDDGGDNDNDATIASANSESTENKEQFIIKLQNLYNWTPSNYIGDDEIENFRNGTPDKLVSDSLLKLKRLRKERILNKVLKPTTEERELYFKVKRILKEVILAKKVSKVPINNVRAFPVLQTNYNGSIPVVRAQPGRKRKHKK.

Residues 19–134 (SILNAASVKC…KFSSELLLRE (116 aa)) form the Bromo domain. The interval 336–378 (NEEGINRKQNDENNKNVDGKSNGVQDDGGDNDNDATIASANSE) is disordered. Residues 339 to 353 (GINRKQNDENNKNVD) are compositionally biased toward basic and acidic residues.

Component of the two forms of the RSC complex composed of at least either RSC1 or RSC2, and ARP7, ARP9, LDB7, NPL6, RSC3, RSC30, RSC4, RSC58, RSC6, RSC8, RSC9, SFH1, STH1, HTL1 and probably RTT102. The complexes interact with histone and histone variant components of centromeric chromatin.

The protein localises to the nucleus. Its function is as follows. Component of the chromatin structure-remodeling complex (RSC), which is involved in transcription regulation and nucleosome positioning. RSC is responsible for the transfer of a histone octamer from a nucleosome core particle to naked DNA. The reaction requires ATP and involves an activated RSC-nucleosome intermediate. Remodeling reaction also involves DNA translocation, DNA twist and conformational change. As a reconfigurer of centromeric and flanking nucleosomes, RSC complex is required both for proper kinetochore function in chromosome segregation and, via a PKC1-dependent signaling pathway, for organization of the cellular cytoskeleton. The protein is Chromatin structure-remodeling complex protein RSC58 (RSC58) of Saccharomyces cerevisiae (strain ATCC 204508 / S288c) (Baker's yeast).